The primary structure comprises 357 residues: Velvet complex subunit 2 (357 aa).

A Velvet domain is found at 32-341 (RRAERKYKLE…AQQGIKIPIR (310 aa)).

It belongs to the velvet family. VelB subfamily. As to quaternary structure, component of the heterotrimeric velvet complex composed of LAE1, VEL1 and VEL2; VEL1A acting as a bridging protein between LAE1 and VEL2. Forms a heterodimeric complex with VOS1; the formation of the VEL2-VOS1 complex is light-dependent.

Its subcellular location is the nucleus. The protein localises to the cytoplasm. In terms of biological role, component of the velvet transcription factor complex that controls sexual/asexual developmental ratio in response to light, promoting sexual development in the darkness while stimulating asexual sporulation under illumination. The velvet complex acts as a global regulator for secondary metabolite gene expression. Component of the VEL2-VOS1 heterodimeric complex that plays a dual role in activating genes associated with spore maturation and repressing certain development-associated genes. The complex binds DNA through the DNA-binding domain of VOS1 that recognizes an 11-nucleotide consensus sequence 5'-CTGGCCGCGGC-3' consisting of two motifs in the promoters of key developmental regulatory genes. The VEL2-VOS1 complex is required for normal pseudothecium development and regulates asexual spore compartmentalization, pigmentation and germination. This chain is Velvet complex subunit 2, found in Cochliobolus heterostrophus (strain C5 / ATCC 48332 / race O) (Southern corn leaf blight fungus).